A 480-amino-acid chain; its full sequence is Cysteine--tRNA ligase (480 aa).

Position 31 (Cys31) interacts with Zn(2+). Residues 33–43 (PTVYDSSHIGH) carry the 'HIGH' region motif. Residues Cys211, His236, and Glu240 each coordinate Zn(2+). Positions 269–273 (KMSKS) match the 'KMSKS' region motif. Lys272 is a binding site for ATP.

This sequence belongs to the class-I aminoacyl-tRNA synthetase family. Zn(2+) is required as a cofactor.

The catalysed reaction is tRNA(Cys) + L-cysteine + ATP = L-cysteinyl-tRNA(Cys) + AMP + diphosphate. The protein is Cysteine--tRNA ligase of Encephalitozoon cuniculi (strain GB-M1) (Microsporidian parasite).